Reading from the N-terminus, the 282-residue chain is Large ribosomal subunit protein uL4c (282 aa).

Residues 1–43 constitute a chloroplast transit peptide; the sequence is MAASLSFFSSSIFLSNPNIQSSKHLLFRSPKQLSVAAIATIRS. Disordered regions lie at residues 86–133 and 251–282; these read RNQR…GGVV and RYGD…ESSE. The span at 255–282 shows a compositional bias: acidic residues; that stretch reads ENEWEDEEEDDQEDNDGGEAEESTESSE.

Belongs to the universal ribosomal protein uL4 family. In terms of assembly, part of the 50S ribosomal subunit.

It localises to the plastid. Its subcellular location is the chloroplast. This protein binds directly and specifically to 23S rRNA. May play a role in plastid transcriptional regulation. The sequence is that of Large ribosomal subunit protein uL4c (RPL4) from Nicotiana tabacum (Common tobacco).